A 120-amino-acid chain; its full sequence is SGSCAVRTCWKQLSSFHETGKLLKLKYETAVRVHSITNDATGETELISPKKHSYTLKNHIPRTTDLVYIEDSPNFCRPSKYSPGTAGRVCSKETNCESMCCGQGYNTQSLLVHRPCHCQV.

Ser1 carries the O-palmitoleoyl serine; by PORCN lipid modification. A disulfide bridge connects residues Cys90 and Cys101.

The protein belongs to the Wnt family. In terms of processing, palmitoleoylation is required for efficient binding to frizzled receptors. Depalmitoleoylation leads to Wnt signaling pathway inhibition.

Its subcellular location is the secreted. It is found in the extracellular space. The protein localises to the extracellular matrix. Its function is as follows. Ligand for members of the frizzled family of seven transmembrane receptors. Probable developmental protein. May be a signaling molecule which affects the development of discrete regions of tissues. Is likely to signal over only few cell diameters. The sequence is that of Protein Wnt-9 (WNT-9) from Alopias vulpinus (Common thresher shark).